The chain runs to 441 residues: GTPase Der (441 aa).

EngA-type G domains follow at residues 3–167 (PLIA…PKGS) and 176–351 (TKIA…EQFA). Residues 9–16 (GRPNVGKS), 56–60 (DTGGF), 119–122 (NKID), 182–189 (GRPNVGKS), 229–233 (DTAGI), and 294–297 (NKWD) contribute to the GTP site. The region spanning 352–436 (RRITTSDLNR…PMRLLFKGRE (85 aa)) is the KH-like domain.

This sequence belongs to the TRAFAC class TrmE-Era-EngA-EngB-Septin-like GTPase superfamily. EngA (Der) GTPase family. Associates with the 50S ribosomal subunit.

In terms of biological role, GTPase that plays an essential role in the late steps of ribosome biogenesis. This chain is GTPase Der, found in Geotalea uraniireducens (strain Rf4) (Geobacter uraniireducens).